The following is a 265-amino-acid chain: MTTEDTLTIAGRSYQSRLLVGTGKYQDFAQTRAALDASGTQIVTVAIRRTNIGQNPDEPSLLDFVPPSQFTLLPNTAGCYSADDAVRTLRLARELLDGHDLVKLEVLGDPQNLFPNMPETLKATRTLVDEGFKVMVYCTDDPIQCRMLEDLGAVAVMPLASLIGSGMGILNPWNLRLIIDQSSVPVLVDAGVGTASDAAIAMELGCDGVLMNTAIAGARDPILMASAMRKAVEGGREAYLAGRVPRKLYSAAPSSPTEGLIAAVK.

Residue Lys103 is the Schiff-base intermediate with DXP of the active site. Residues Gly164, Ala190–Gly191, and Asn212–Thr213 each bind 1-deoxy-D-xylulose 5-phosphate.

It belongs to the ThiG family. Homotetramer. Forms heterodimers with either ThiH or ThiS.

The protein localises to the cytoplasm. It catalyses the reaction [ThiS sulfur-carrier protein]-C-terminal-Gly-aminoethanethioate + 2-iminoacetate + 1-deoxy-D-xylulose 5-phosphate = [ThiS sulfur-carrier protein]-C-terminal Gly-Gly + 2-[(2R,5Z)-2-carboxy-4-methylthiazol-5(2H)-ylidene]ethyl phosphate + 2 H2O + H(+). It participates in cofactor biosynthesis; thiamine diphosphate biosynthesis. Its function is as follows. Catalyzes the rearrangement of 1-deoxy-D-xylulose 5-phosphate (DXP) to produce the thiazole phosphate moiety of thiamine. Sulfur is provided by the thiocarboxylate moiety of the carrier protein ThiS. In vitro, sulfur can be provided by H(2)S. This is Thiazole synthase from Bordetella bronchiseptica (strain ATCC BAA-588 / NCTC 13252 / RB50) (Alcaligenes bronchisepticus).